The primary structure comprises 692 residues: Elongation factor G (692 aa).

The tr-type G domain occupies 8–283 (DKYRNIGIMA…AVVDYMPSPL (276 aa)). GTP is bound by residues 17–24 (AHIDAGKT), 81–85 (DTPGH), and 135–138 (NKMD).

This sequence belongs to the TRAFAC class translation factor GTPase superfamily. Classic translation factor GTPase family. EF-G/EF-2 subfamily.

It localises to the cytoplasm. Its function is as follows. Catalyzes the GTP-dependent ribosomal translocation step during translation elongation. During this step, the ribosome changes from the pre-translocational (PRE) to the post-translocational (POST) state as the newly formed A-site-bound peptidyl-tRNA and P-site-bound deacylated tRNA move to the P and E sites, respectively. Catalyzes the coordinated movement of the two tRNA molecules, the mRNA and conformational changes in the ribosome. The protein is Elongation factor G of Trichlorobacter lovleyi (strain ATCC BAA-1151 / DSM 17278 / SZ) (Geobacter lovleyi).